The chain runs to 64 residues: Large ribosomal subunit protein bL28 (64 aa).

Positions 1 to 21 (MAKKDQLTLRGPLYGNNRSHS) are disordered.

It belongs to the bacterial ribosomal protein bL28 family.

This is Large ribosomal subunit protein bL28 from Mycoplasma genitalium (strain ATCC 33530 / DSM 19775 / NCTC 10195 / G37) (Mycoplasmoides genitalium).